The sequence spans 1837 residues: Zinc finger SWIM domain-containing protein 8 (1837 aa).

Serine 36, serine 48, and serine 53 each carry phosphoserine. Residues 45 to 65 (RKQSAGPNSPTGGGGGGGSGG) are disordered. The span at 55–65 (TGGGGGGGSGG) shows a compositional bias: gly residues. The SWIM-type zinc-finger motif lies at 172–208 (YNVAVMFDRCRVTSCSCTCGAGAKWCTHVVALCLFRI). Serine 437 is modified (phosphoserine). 3 disordered regions span residues 514–727 (SRPG…EEDD), 803–823 (NPPDLKVEPPPAKGKKNKVST), and 1016–1232 (SQTH…VPNQ). Basic and acidic residues-rich tracts occupy residues 523–532 (GLEESRDRPR) and 566–575 (LSAEGGDKAL). Position 567 is a phosphoserine (serine 567). Gly residues predominate over residues 579 to 602 (GPGGGKAKALGGAGSGSKGSAGGG). Over residues 1019 to 1040 (HKPQTLSSFYSSSRPTTASQRS) the composition is skewed to polar residues. Over residues 1119-1130 (SRGGYNGRGWGS) the composition is skewed to gly residues. Threonine 1139 carries the phosphothreonine modification. A compositionally biased stretch (polar residues) spans 1144-1159 (IDSSAPETTSDSSPTL). A phosphoserine mark is found at serine 1153, serine 1156, and serine 1160. Over residues 1174-1209 (GRGQDSDSISSSSSDSLGSSSSSGSRRASASGGARA) the composition is skewed to low complexity. Basic and acidic residues predominate over residues 1210-1226 (KTVEVGRYKGRRPESHA). Residue serine 1267 is modified to Phosphoserine. Disordered regions lie at residues 1442-1464 (SASGIRAGGEAGRGMPEGRGGPG) and 1635-1656 (QPSPLVSGGFPPPEEETHSQPV). A compositionally biased stretch (gly residues) spans 1447-1464 (RAGGEAGRGMPEGRGGPG). Serine 1836 carries the post-translational modification Phosphoserine.

It belongs to the ZSWIM8 family. Component of the SCF-like E3 ubiquitin-protein ligase complex which contains CUL3, RBX1, ELOB, ELOC and ZSWIM8. As to quaternary structure, (Microbial infection) Interacts with Zika virus protein NS5; this interaction allows STAT2 binding and subsequent proteasomal degradation.

It is found in the cytoplasm. The protein localises to the cytosol. Its pathway is protein modification; protein ubiquitination. Its function is as follows. Substrate recognition component of a SCF-like E3 ubiquitin-protein ligase complex that promotes target-directed microRNA degradation (TDMD), a process that mediates degradation of microRNAs (miRNAs). The SCF-like E3 ubiquitin-protein ligase complex acts by catalyzing ubiquitination and subsequent degradation of AGO proteins (AGO1, AGO2, AGO3 and/or AGO4), thereby exposing miRNAs for degradation. Specifically recognizes and binds AGO proteins when they are engaged with a TDMD target. May also act as a regulator of axon guidance: specifically recognizes misfolded ROBO3 and promotes its ubiquitination and subsequent degradation. Plays an essential role for proper embryonic development of heart and lung. Controls protein quality of DAB1, a key signal molecule for brain development, thus protecting its signaling strength. Mechanistically, recognizes intrinsically disordered regions of DAB1 and eliminates misfolded DAB1 that cannot be properly phosphorylated. Functionally, (Microbial infection) Participates in Zika virus inhibition of IFN signaling by acting as a scaffold protein to connect ZSWIM8/CUL3 ligase complex and STAT2, leading to STAT2 degradation. The protein is Zinc finger SWIM domain-containing protein 8 of Homo sapiens (Human).